The chain runs to 141 residues: Galactose-6-phosphate isomerase subunit LacA 1 (141 aa).

This sequence belongs to the LacAB/RpiB family. In terms of assembly, heteromultimeric protein consisting of LacA and LacB.

The enzyme catalyses aldehydo-D-galactose 6-phosphate = keto-D-tagatose 6-phosphate. The protein operates within carbohydrate metabolism; D-galactose 6-phosphate degradation; D-tagatose 6-phosphate from D-galactose 6-phosphate: step 1/1. The protein is Galactose-6-phosphate isomerase subunit LacA 1 of Streptococcus pyogenes serotype M3 (strain SSI-1).